Reading from the N-terminus, the 514-residue chain is Cholesterol side-chain cleavage enzyme, mitochondrial (514 aa).

The N-terminal 39 residues, 1-39, are a transit peptide targeting the mitochondrion; that stretch reads SFRLSLSASTYAQRGSFTTPEHDFTLFPHRNHSVTSESR. Cys461 is a heme binding site.

It belongs to the cytochrome P450 family. Heme is required as a cofactor.

The protein resides in the mitochondrion inner membrane. The enzyme catalyses 6 reduced [adrenodoxin] + cholesterol + 3 O2 + 6 H(+) = 4-methylpentanal + pregnenolone + 6 oxidized [adrenodoxin] + 4 H2O. It participates in lipid metabolism; C21-steroid hormone metabolism. In terms of biological role, catalyzes the side-chain cleavage reaction of cholesterol to pregnenolone, the precursor of most steroid hormones. This is Cholesterol side-chain cleavage enzyme, mitochondrial (CYP11A1) from Hypanus americanus (Southern stingray).